The chain runs to 196 residues: UMP-CMP kinase (196 aa).

Residue 13 to 18 participates in ATP binding; the sequence is GAGKGT. A Phosphoserine modification is found at Ser-33. An NMP region spans residues 33–63; the sequence is SAGELLRDERKNPDSQYGELIEKYIKDGKIV. Arg-39 lines the a ribonucleoside 5'-phosphate pocket. N6-acetyllysine occurs at positions 43 and 55. Residues 61–63 and 93–96 contribute to the a ribonucleoside 5'-phosphate site; these read KIV and GFPR. Residue Asn-100 coordinates CMP. Lys-106 bears the N6-succinyllysine mark. Positions 133–143 are LID; that stretch reads ERGKSSGRSDD. Arg-134 provides a ligand contact to ATP. Arg-140 and Arg-151 together coordinate a ribonucleoside 5'-phosphate. Lys-179 contributes to the ATP binding site. Residue Ser-180 is modified to Phosphoserine.

Belongs to the adenylate kinase family. UMP-CMP kinase subfamily. In terms of assembly, monomer. Requires Mg(2+) as cofactor.

It localises to the nucleus. It is found in the cytoplasm. It carries out the reaction CMP + ATP = CDP + ADP. The enzyme catalyses dCMP + ATP = dCDP + ADP. It catalyses the reaction UMP + ATP = UDP + ADP. The catalysed reaction is a 2'-deoxyribonucleoside 5'-diphosphate + ATP = a 2'-deoxyribonucleoside 5'-triphosphate + ADP. It carries out the reaction a ribonucleoside 5'-diphosphate + ATP = a ribonucleoside 5'-triphosphate + ADP. Catalyzes the phosphorylation of pyrimidine nucleoside monophosphates at the expense of ATP. Plays an important role in de novo pyrimidine nucleotide biosynthesis. Has preference for UMP and CMP as phosphate acceptors. Also displays broad nucleoside diphosphate kinase activity. The chain is UMP-CMP kinase from Bos taurus (Bovine).